An 881-amino-acid polypeptide reads, in one-letter code: Squamosa promoter-binding-like protein 1 (881 aa).

The interval 49–69 (FPLGNSSNSSSSCSDEGNDKK) is disordered. The segment covering 53–62 (NSSNSSSSCS) has biased composition (low complexity). Residues 96 to 187 (PAKKTKSGAV…RKTNPEPGAN (92 aa)) are sufficient and necessary for DNA binding. The SBP-type zinc-finger motif lies at 103 to 180 (GAVCQVENCE…AGHNKRRRKT (78 aa)). Zn(2+)-binding residues include Cys106, Cys111, Cys128, His131, Cys147, Cys150, His154, and Cys166. The short motif at 163–179 (KRSCRRRLAGHNKRRRK) is the Bipartite nuclear localization signal element. Basic residues predominate over residues 170 to 179 (LAGHNKRRRK). 2 disordered regions span residues 170–193 (LAGH…PSDD) and 274–358 (FSAR…EDAQ). A compositionally biased stretch (polar residues) spans 275 to 284 (SARQDGTATE). The span at 285–295 (NRSEKQVKMND) shows a compositional bias: basic and acidic residues. Polar residues predominate over residues 319–338 (PATSSLDYPSWIHQSSPPQT). Residues 339-356 (SRNSDSASDQSPSSSSED) show a composition bias toward low complexity.

Zn(2+) serves as cofactor.

The protein localises to the nucleus. Its function is as follows. Trans-acting factor that binds specifically to the consensus nucleotide sequence 5'-TNCGTACAA-3' of AP1 promoter. Binds specifically to the 5'-GTAC-3' core sequence. This is Squamosa promoter-binding-like protein 1 (SPL1) from Arabidopsis thaliana (Mouse-ear cress).